The chain runs to 212 residues: Thymidylate kinase (212 aa).

Residue 10 to 17 participates in ATP binding; the sequence is GPDGSGKS.

This sequence belongs to the thymidylate kinase family.

It catalyses the reaction dTMP + ATP = dTDP + ADP. Its function is as follows. Phosphorylation of dTMP to form dTDP in both de novo and salvage pathways of dTTP synthesis. This Exiguobacterium sp. (strain ATCC BAA-1283 / AT1b) protein is Thymidylate kinase.